The chain runs to 527 residues: Phospholipase A1-Igamma3, chloroplastic (527 aa).

A chloroplast-targeting transit peptide spans 1-52; it reads MASLSLPITLKNPRFFSSSPQNIFKTQPQTLVLTTKFKTCSIICSSSCTSIS. Positions 55 to 65 are enriched in low complexity; it reads TTQQKQSNKQT. A disordered region spans residues 55–82; the sequence is TTQQKQSNKQTHVSDNKREEKAEEEEEE. Over residues 66 to 75 the composition is skewed to basic and acidic residues; sequence HVSDNKREEK. A GXSXG motif is present at residues 300–304; sequence GHSLG. Catalysis depends on serine 302, which acts as the Acyl-ester intermediate. Active-site charge relay system residues include aspartate 366 and histidine 423.

Belongs to the AB hydrolase superfamily. Lipase family. In terms of tissue distribution, highly expressed in flowers. Lower levels in seedlings, leaves and stems.

It localises to the plastid. The protein resides in the chloroplast. It carries out the reaction 1,2-dihexadecanoyl-sn-glycero-3-phosphocholine + H2O = 2-hexadecanoyl-sn-glycero-3-phosphocholine + hexadecanoate + H(+). The enzyme catalyses a 1,2-diacyl-3-O-(beta-D-galactosyl)-sn-glycerol + H2O = an acyl-3-O-(beta-D-galactosyl)-sn-glycerol + a fatty acid + H(+). The catalysed reaction is a 1,2-diacyl-3-O-[alpha-D-galactosyl-(1-&gt;6)-beta-D-galactosyl]-sn-glycerol + H2O = acyl-3-O-[alpha-D-galactosyl-(1-&gt;6)-beta-D-galactosyl]-sn-glycerol + a fatty acid + H(+). Functionally, acylhydrolase that catalyzes the hydrolysis of phosphatidylcholine at the sn-1 position. Moderate activity toward phosphatidylcholine (PC), monogalactosyldiacylglycerol (MGDG), digalactosyldiacylglycerol (DGDG) and triacylglycerol (TAG). This is Phospholipase A1-Igamma3, chloroplastic from Arabidopsis thaliana (Mouse-ear cress).